The following is a 118-amino-acid chain: NLYQFKNMIHCTVPSRPWWHFADYGCYCGRGGKGTPVDDLDRCCQVHDNCYEKAGKMGCWPYFTLYKYKCSQGKLTCSGGNSKCGAAVCNCDLVAANCFAGARYIDANYNINFKKRCQ.

7 disulfide bridges follow: cysteine 11–cysteine 70, cysteine 26–cysteine 117, cysteine 28–cysteine 44, cysteine 43–cysteine 98, cysteine 50–cysteine 91, cysteine 59–cysteine 84, and cysteine 77–cysteine 89. Tyrosine 27, glycine 29, and glycine 31 together coordinate Ca(2+). Residue histidine 47 is part of the active site. Aspartate 48 lines the Ca(2+) pocket. Positions 52–69 (EKAGKMGCWPYFTLYKYK) match the Coagulation factor Xa binding motif motif. Aspartate 92 is a catalytic residue.

The protein belongs to the phospholipase A2 family. Group I subfamily. D49 sub-subfamily. It depends on Ca(2+) as a cofactor. Expressed by the venom gland.

It localises to the secreted. It catalyses the reaction a 1,2-diacyl-sn-glycero-3-phosphocholine + H2O = a 1-acyl-sn-glycero-3-phosphocholine + a fatty acid + H(+). Functionally, snake venom phospholipase A2 (PLA2) that shows several activities. It shows strong anticoagulant activity, probably by binding to coagulation factor Xa (F10) and inhibiting the formation of the prothrombinase complex, shows direct hemolytic action, causes neuromuscular blockade with a gradual contracture and a decreased sensitivity to ACh and KCl, abolishes twitches evoked by indirect stimulation earlier than those by direct stimulation (in the mouse phrenic nerve-diaphragm preparation), and causes myonecrosis when injected intramuscularly. PLA2 catalyzes the calcium-dependent hydrolysis of the 2-acyl groups in 3-sn-phosphoglycerides. The polypeptide is Basic phospholipase A2 CM-III (Naja mossambica (Mozambique spitting cobra)).